The following is a 405-amino-acid chain: Acetate kinase (405 aa).

Asparagine 7 lines the Mg(2+) pocket. Lysine 14 lines the ATP pocket. Arginine 90 is a binding site for substrate. Aspartate 147 serves as the catalytic Proton donor/acceptor. ATP contacts are provided by residues 207–211, 282–284, and 331–335; these read HLGNG, DFR, and GVGEN. A Mg(2+)-binding site is contributed by glutamate 384.

It belongs to the acetokinase family. Homodimer. It depends on Mg(2+) as a cofactor. The cofactor is Mn(2+).

It is found in the cytoplasm. It carries out the reaction acetate + ATP = acetyl phosphate + ADP. It functions in the pathway metabolic intermediate biosynthesis; acetyl-CoA biosynthesis; acetyl-CoA from acetate: step 1/2. Catalyzes the formation of acetyl phosphate from acetate and ATP. Can also catalyze the reverse reaction. The sequence is that of Acetate kinase from Clostridium kluyveri (strain ATCC 8527 / DSM 555 / NBRC 12016 / NCIMB 10680 / K1).